The sequence spans 334 residues: tRNA N6-adenosine threonylcarbamoyltransferase (334 aa).

Positions 110 and 114 each coordinate Fe cation. Residues 133–137 (IVSGG), aspartate 166, glycine 179, aspartate 183, and asparagine 275 contribute to the substrate site. Residue aspartate 303 coordinates Fe cation.

This sequence belongs to the KAE1 / TsaD family. Fe(2+) serves as cofactor.

The protein resides in the cytoplasm. It carries out the reaction L-threonylcarbamoyladenylate + adenosine(37) in tRNA = N(6)-L-threonylcarbamoyladenosine(37) in tRNA + AMP + H(+). Functionally, required for the formation of a threonylcarbamoyl group on adenosine at position 37 (t(6)A37) in tRNAs that read codons beginning with adenine. Is involved in the transfer of the threonylcarbamoyl moiety of threonylcarbamoyl-AMP (TC-AMP) to the N6 group of A37, together with TsaE and TsaB. TsaD likely plays a direct catalytic role in this reaction. The chain is tRNA N6-adenosine threonylcarbamoyltransferase from Salinibacter ruber (strain DSM 13855 / M31).